Reading from the N-terminus, the 273-residue chain is F-actin-capping protein subunit alpha (273 aa).

The protein belongs to the F-actin-capping protein alpha subunit family. Component of the F-actin capping complex, composed of a heterodimer of an alpha and a beta subunit.

The protein localises to the cytoplasm. Its subcellular location is the cytoskeleton. It localises to the actin patch. Functionally, F-actin-capping proteins bind in a Ca(2+)-independent manner to the fast growing ends of actin filaments (barbed end) thereby blocking the exchange of subunits at these ends. Unlike other capping proteins (such as gelsolin and severin), these proteins do not sever actin filaments. This chain is F-actin-capping protein subunit alpha (cap1), found in Aspergillus oryzae (strain ATCC 42149 / RIB 40) (Yellow koji mold).